Here is a 144-residue protein sequence, read N- to C-terminus: Large ribosomal subunit protein uL13 (144 aa).

The protein belongs to the universal ribosomal protein uL13 family. Part of the 50S ribosomal subunit.

This protein is one of the early assembly proteins of the 50S ribosomal subunit, although it is not seen to bind rRNA by itself. It is important during the early stages of 50S assembly. In Clostridium kluyveri (strain NBRC 12016), this protein is Large ribosomal subunit protein uL13.